The chain runs to 829 residues: Leucine--tRNA ligase (829 aa).

A 'HIGH' region motif is present at residues 34 to 44 (PYPSGNIHMGH). The 'KMSKS' region motif lies at 591–595 (KMSKS). Lys594 contacts ATP.

The protein belongs to the class-I aminoacyl-tRNA synthetase family.

It localises to the cytoplasm. It catalyses the reaction tRNA(Leu) + L-leucine + ATP = L-leucyl-tRNA(Leu) + AMP + diphosphate. The protein is Leucine--tRNA ligase of Ehrlichia chaffeensis (strain ATCC CRL-10679 / Arkansas).